The sequence spans 730 residues: 1,4-alpha-glucan branching enzyme GlgB (730 aa).

The active-site Nucleophile is Asp-405. Glu-458 (proton donor) is an active-site residue.

It belongs to the glycosyl hydrolase 13 family. GlgB subfamily. As to quaternary structure, monomer.

It catalyses the reaction Transfers a segment of a (1-&gt;4)-alpha-D-glucan chain to a primary hydroxy group in a similar glucan chain.. The protein operates within glycan biosynthesis; glycogen biosynthesis. Catalyzes the formation of the alpha-1,6-glucosidic linkages in glycogen by scission of a 1,4-alpha-linked oligosaccharide from growing alpha-1,4-glucan chains and the subsequent attachment of the oligosaccharide to the alpha-1,6 position. This is 1,4-alpha-glucan branching enzyme GlgB from Haemophilus influenzae (strain PittGG).